The following is a 260-amino-acid chain: NH(3)-dependent NAD(+) synthetase (260 aa).

31–38 (GLSGGLDS) provides a ligand contact to ATP. D37 contacts Mg(2+). Position 112 (R112) interacts with deamido-NAD(+). ATP is bound at residue T132. E137 contacts Mg(2+). Residues K161 and S183 each contribute to the ATP site.

It belongs to the NAD synthetase family. Homodimer.

The catalysed reaction is deamido-NAD(+) + NH4(+) + ATP = AMP + diphosphate + NAD(+) + H(+). The protein operates within cofactor biosynthesis; NAD(+) biosynthesis; NAD(+) from deamido-NAD(+) (ammonia route): step 1/1. In terms of biological role, catalyzes the ATP-dependent amidation of deamido-NAD to form NAD. Uses ammonia as a nitrogen source. This chain is NH(3)-dependent NAD(+) synthetase, found in Helicobacter pylori (strain HPAG1).